A 382-amino-acid polypeptide reads, in one-letter code: Lipid-A-disaccharide synthase (382 aa).

The protein belongs to the LpxB family.

The catalysed reaction is 2-N,3-O-bis[(3R)-3-hydroxytetradecanoyl]-alpha-D-glucosaminyl 1-phosphate + UDP-2-N,3-O-bis[(3R)-3-hydroxytetradecanoyl]-alpha-D-glucosamine = lipid A disaccharide (E. coli) + UDP + H(+). It catalyses the reaction a lipid X + a UDP-2-N,3-O-bis[(3R)-3-hydroxyacyl]-alpha-D-glucosamine = a lipid A disaccharide + UDP + H(+). It functions in the pathway glycolipid biosynthesis; lipid IV(A) biosynthesis; lipid IV(A) from (3R)-3-hydroxytetradecanoyl-[acyl-carrier-protein] and UDP-N-acetyl-alpha-D-glucosamine: step 5/6. Functionally, condensation of UDP-2,3-diacylglucosamine and 2,3-diacylglucosamine-1-phosphate to form lipid A disaccharide, a precursor of lipid A, a phosphorylated glycolipid that anchors the lipopolysaccharide to the outer membrane of the cell. The polypeptide is Lipid-A-disaccharide synthase (Shigella flexneri).